The sequence spans 220 residues: Cytidylate kinase (220 aa).

Gly10 to Thr18 provides a ligand contact to ATP.

The protein belongs to the cytidylate kinase family. Type 1 subfamily.

It is found in the cytoplasm. The catalysed reaction is CMP + ATP = CDP + ADP. It catalyses the reaction dCMP + ATP = dCDP + ADP. The chain is Cytidylate kinase from Lactococcus lactis subsp. lactis (strain IL1403) (Streptococcus lactis).